A 289-amino-acid chain; its full sequence is 4-hydroxybenzoate octaprenyltransferase (289 aa).

7 helical membrane-spanning segments follow: residues 33–53 (LWAL…AVFV), 99–119 (LFVV…TMTI), 141–161 (LPQV…FAAV), 163–183 (ESVP…AVAY), 213–233 (LIIG…GRLN), 238–258 (EFYW…KLIV), and 268–288 (AFLN…MSYW).

Belongs to the UbiA prenyltransferase family. Requires Mg(2+) as cofactor.

It is found in the cell inner membrane. The enzyme catalyses all-trans-octaprenyl diphosphate + 4-hydroxybenzoate = 4-hydroxy-3-(all-trans-octaprenyl)benzoate + diphosphate. It participates in cofactor biosynthesis; ubiquinone biosynthesis. Its function is as follows. Catalyzes the prenylation of para-hydroxybenzoate (PHB) with an all-trans polyprenyl group. Mediates the second step in the final reaction sequence of ubiquinone-8 (UQ-8) biosynthesis, which is the condensation of the polyisoprenoid side chain with PHB, generating the first membrane-bound Q intermediate 3-octaprenyl-4-hydroxybenzoate. This chain is 4-hydroxybenzoate octaprenyltransferase, found in Enterobacter sp. (strain 638).